An 801-amino-acid chain; its full sequence is Interleukin-4 receptor subunit alpha (801 aa).

An N-terminal signal peptide occupies residues 1 to 25 (MGWLCTKFLSSVSCLILLWVTGSGG). Topologically, residues 26–232 (IKVLGDPTCF…NHFQLPLLQR (207 aa)) are extracellular. Cys34 and Cys44 are disulfide-bonded. A glycan (N-linked (GlcNAc...) asparagine) is linked at Asn71. Cysteines 74 and 86 form a disulfide. Positions 125-223 (APDNLTLHTN…EWSPSITWYN (99 aa)) constitute a Fibronectin type-III domain. 3 N-linked (GlcNAc...) asparagine glycosylation sites follow: Asn128, Asn134, and Asn162. Ser164 is modified (phosphoserine). N-linked (GlcNAc...) asparagine glycosylation occurs at Asn176. The short motif at 212-216 (WSEWS) is the WSXWS motif element. Residues 233–256 (LPLGVSISCICILLFCLTCYFSII) traverse the membrane as a helical segment. Residues 257 to 801 (KIKKIWWDQI…PVGTLGVTVS (545 aa)) lie on the Cytoplasmic side of the membrane. A Box 1 motif motif is present at residues 262-270 (WWDQIPTPA). Positions 424-476 (VGQSSMAESSSLLPSESGQASTSWACFPTGPSETTCQVTGQQPPHPDPERATG) are disordered. Positions 426–444 (QSSMAESSSLLPSESGQAS) are enriched in low complexity. A required for IRS1 activation and IL4-induced cell growth region spans residues 439–549 (ESGQASTSWA…ESWEQILHMS (111 aa)). The span at 454 to 465 (PSETTCQVTGQQ) shows a compositional bias: polar residues. Tyr492 is modified (phosphotyrosine). A disordered region spans residues 493–515 (RSFSDFSSPAPNPGELASEQKQA). The required for IL4-induced gene expression stretch occupies residues 549–644 (SVLQHGTAGS…NSMPLFTFGL (96 aa)). Phosphotyrosine is present on residues Tyr566, Tyr594, and Tyr622. Residues 698–703 (IVYSSL) carry the ITIM motif motif. Positions 767 to 801 (RTPSNLSGVGKGPGHSPVPSQTTEVPVGTLGVTVS) are disordered.

This sequence belongs to the type I cytokine receptor family. Type 4 subfamily. As to quaternary structure, the functional IL4 receptor is formed by initial binding of IL4 to IL4R. Subsequent recruitment to the complex of the common gamma chain, in immune cells, creates a type I receptor and, in non-immune cells, of IL13RA1 forms a type II receptor. IL4R can also interact with the IL13/IL13RA1 complex to form a similar type II receptor. Interacts with PIK3C3. Interacts with the SH2-containing phosphatases, PTPN6/SHIP1, PTPN11/SHIP2 and INPP5D/SHIP. Interacts with JAK1 through a Box 1-containing region; inhibited by SOCS5. Interacts with SOCS5; inhibits IL4 signaling. Interacts with JAK3. Interacts with CLM1. Interacts with IL13RA2. In terms of processing, on IL4 binding, phosphorylated on C-terminal tyrosine residues. As to expression, isoform 2 is expressed in kidney, spleen, lung and liver.

The protein resides in the cell membrane. It localises to the secreted. Its function is as follows. Receptor for both interleukin 4 and interleukin 13. Couples to the JAK1/2/3-STAT6 pathway. The IL4 response is involved in promoting Th2 differentiation. The IL4/IL13 responses are involved in regulating IgE production and, chemokine and mucus production at sites of allergic inflammation. In certain cell types, can signal through activation of insulin receptor substrates, IRS1/IRS2. Functionally, isoform 2 (soluble form) inhibits IL4-induced spleen cell proliferation. The sequence is that of Interleukin-4 receptor subunit alpha (Il4r) from Rattus norvegicus (Rat).